Here is a 422-residue protein sequence, read N- to C-terminus: Glutamyl-tRNA reductase (422 aa).

Residues 48-51, Ser-100, 105-107, and Gln-111 contribute to the substrate site; these read TCNR and EDQ. Cys-49 functions as the Nucleophile in the catalytic mechanism. An NADP(+)-binding site is contributed by 180–185; sequence GTGEMG.

It belongs to the glutamyl-tRNA reductase family. In terms of assembly, homodimer.

The enzyme catalyses (S)-4-amino-5-oxopentanoate + tRNA(Glu) + NADP(+) = L-glutamyl-tRNA(Glu) + NADPH + H(+). It participates in porphyrin-containing compound metabolism; protoporphyrin-IX biosynthesis; 5-aminolevulinate from L-glutamyl-tRNA(Glu): step 1/2. Catalyzes the NADPH-dependent reduction of glutamyl-tRNA(Glu) to glutamate 1-semialdehyde (GSA). This Methanococcoides burtonii (strain DSM 6242 / NBRC 107633 / OCM 468 / ACE-M) protein is Glutamyl-tRNA reductase.